Consider the following 157-residue polypeptide: Small ribosomal subunit protein uS7 (157 aa).

This sequence belongs to the universal ribosomal protein uS7 family. As to quaternary structure, part of the 30S ribosomal subunit. Contacts proteins S9 and S11.

One of the primary rRNA binding proteins, it binds directly to 16S rRNA where it nucleates assembly of the head domain of the 30S subunit. Is located at the subunit interface close to the decoding center, probably blocks exit of the E-site tRNA. This is Small ribosomal subunit protein uS7 from Francisella tularensis subsp. tularensis (strain FSC 198).